Reading from the N-terminus, the 300-residue chain is Chaperone protein dnaJ 50 (300 aa).

Positions 1–27 (MAPPVTERWCLALILLFLSLFVQSSTA) are cleaved as a signal peptide. Residues 28–122 (IYCGAEDCYA…RAKYGHKSDP (95 aa)) lie on the Lumenal side of the membrane. The J domain maps to 34 to 98 (DCYALLGVAQ…TTRAQYDYAI (65 aa)). Residues asparagine 46 and asparagine 88 are each glycosylated (N-linked (GlcNAc...) asparagine). The helical transmembrane segment at 123 to 143 (RAVLVGLLVVLSAFQYLNNVA) threads the bilayer. The Cytoplasmic segment spans residues 144-206 (RYNEAIATVK…LQIKGAEKPS (63 aa)). The chain crosses the membrane as a helical span at residues 207–227 (VWELLGVRFILLPYTIIKLLV). Over 228-300 (WYSSWVWRYK…EMRKESKRRR (73 aa)) the chain is Lumenal.

In terms of tissue distribution, expressed in leaves, flower buds and flowers.

It localises to the endoplasmic reticulum membrane. In terms of biological role, may play a role in protein folding in the endoplasmic reticulum. In Arabidopsis thaliana (Mouse-ear cress), this protein is Chaperone protein dnaJ 50 (C50).